Consider the following 330-residue polypeptide: Aquaporin-3 (330 aa).

At 1-40 (MSATPIIHLRDVKKRTGVLNAWERVRNKPQVHWAMECFAE) the chain is on the cytoplasmic side. A helical transmembrane segment spans residues 41–61 (ALGVFFYVYFGLGSTAAWVIG). Residues 62–71 (NILKQSGLSS) are Extracellular-facing. The helical transmembrane segment at 72–92 (VFQIGFAYAFGILFAIGVCAA) threads the bilayer. Residues 93 to 124 (TSGGHFNPCVTIAFTIFRGFPPLKAVRYIVAQ) are Cytoplasmic-facing. An NPA 1 motif is present at residues 99–101 (NPC). Residues 125–145 (ILGAYIASALVYNQWKVLIVE) traverse the membrane as a helical segment. Residues 146–157 (SELLLKQAGVYE) are Extracellular-facing. A helical transmembrane segment spans residues 158–178 (TTMFTPNGPAGIFALYLLPGA). Residues 179–183 (QTLPR) are Cytoplasmic-facing. Residues 184–204 (AFLNEFVNCFVLALVIWAALD) traverse the membrane as a helical segment. Topologically, residues 205 to 207 (PTS) are extracellular. Residues 208–228 (FMIPPVMAPFIIAAAYAGSIW) form a helical membrane-spanning segment. The Cytoplasmic segment spans residues 229–264 (GYAVPAISLNSARDIGCRLFALTIWGKSAAGGSYSA). Residues 238–240 (NSA) carry the NPA 2 motif. Residues 265–285 (IAALVNIPATLLAAVVYELFL) form a helical membrane-spanning segment. The Extracellular segment spans residues 286 to 330 (VDSDRVVAGSHLEFMNVAANHRRHRQQAEDDNLVEADDSSQEKPV). Residues 308-330 (RHRQQAEDDNLVEADDSSQEKPV) are disordered. Residues 314 to 324 (EDDNLVEADDS) are compositionally biased toward acidic residues.

It belongs to the MIP/aquaporin (TC 1.A.8) family.

It is found in the cell membrane. The enzyme catalyses H2O(in) = H2O(out). It catalyses the reaction CO2(out) = CO2(in). Water channel required to facilitate the transport of water across membranes. Also mediates the transport of carbon dioxide across the membrane. This chain is Aquaporin-3, found in Laccaria bicolor (Bicoloured deceiver).